The sequence spans 241 residues: Anti-Pycsar protein Apyc1 (241 aa).

Residues 17–215 form a beta-lactamase-like region; sequence DNNNALLEQD…SVQKKTWLMH (199 aa). Residues H59, H61, D63, H64, H142, D162, and H215 each coordinate Zn(2+).

This sequence belongs to the nuclease anti-Pycsar protein Apyc1 family. Homodimer. It depends on Zn(2+) as a cofactor.

It carries out the reaction 3',5'-cyclic CMP + H2O = CMP + H(+). The enzyme catalyses 3',5'-cyclic UMP + H2O = UMP + H(+). Functionally, counteracts the endogenous Pycsar antiviral defense system. Phosphodiesterase that enables metal-dependent hydrolysis of host cyclic nucleotide Pycsar defense signals such as cCMP and cUMP. In Paenibacillus harenae, this protein is Anti-Pycsar protein Apyc1.